Reading from the N-terminus, the 404-residue chain is Cysteine desulfurase IscS (404 aa).

Pyridoxal 5'-phosphate-binding positions include 75–76 (AT), asparagine 155, glutamine 183, and 203–205 (SGH). Residue lysine 206 is modified to N6-(pyridoxal phosphate)lysine. Residue threonine 243 coordinates pyridoxal 5'-phosphate. Cysteine 328 acts as the Cysteine persulfide intermediate in catalysis. Position 328 (cysteine 328) interacts with [2Fe-2S] cluster.

It belongs to the class-V pyridoxal-phosphate-dependent aminotransferase family. NifS/IscS subfamily. Homodimer. Forms a heterotetramer with IscU, interacts with other sulfur acceptors. Pyridoxal 5'-phosphate is required as a cofactor.

It localises to the cytoplasm. The catalysed reaction is (sulfur carrier)-H + L-cysteine = (sulfur carrier)-SH + L-alanine. The protein operates within cofactor biosynthesis; iron-sulfur cluster biosynthesis. Master enzyme that delivers sulfur to a number of partners involved in Fe-S cluster assembly, tRNA modification or cofactor biosynthesis. Catalyzes the removal of elemental sulfur atoms from cysteine to produce alanine. Functions as a sulfur delivery protein for Fe-S cluster synthesis onto IscU, an Fe-S scaffold assembly protein, as well as other S acceptor proteins. This chain is Cysteine desulfurase IscS, found in Serratia proteamaculans (strain 568).